Here is a 606-residue protein sequence, read N- to C-terminus: MSKSLEWDNLGFSLLPWIRTGLDVMGFETMTPVQASTIPMLAGNKDVVVDSVTGSGKTAAFVIPVLEKVVKEEANTSKFKKAHFHSLIIAPTRELSRQIESVVLSFLEHYPSDLFPIKCQLLVGTNEATVRDDVSNFLRNRPQILIGTPGRVLDFLQMPAVKTSACSMVVMDEADRLLDMSFIKDTEKILRLLPKQRRTGLFSATMRSAGSDIFKTGLRNPVRITVNSKNQAPSSLKLNYCVVNPAEKLQLLVSILNNYKFKKCIVYFPTCVSVSYFYSFIQYLGKRNILVNEVEIFSLHGKLQTSARTKTLTAFTDSLSNSVLFTTDVAARGIDIPDVDLVIQLDPPTNTDMFMHRCGRTGRANRVGKAITFLNEGREEDFIPFMQVKNVELEELDLEVKGITTNFYEDFRNWILEDRDRFDKGVKAYVAFIKYYSNHSATSIFRLQSLDYVGIAKLYGLFRLPRMPEITKYLATEKQEGIFPGNWLVDPPVNMDEYKYKDKKREKERQETLKNISLINDKKKLKSELKKKNLAWSDKTLTKERKLERKEKMSLKRKAIEEELKAEELDENAEEERIKEDWKEIVLQNKRKKVSSKAIQGNFDDL.

Positions 7–35 (WDNLGFSLLPWIRTGLDVMGFETMTPVQA) match the Q motif motif. In terms of domain architecture, Helicase ATP-binding spans 38–224 (IPMLAGNKDV…KTGLRNPVRI (187 aa)). ATP is bound at residue 51–58 (SVTGSGKT). Positions 172 to 175 (DEAD) match the DEAD box motif. The Helicase C-terminal domain occupies 248–404 (KLQLLVSILN…ELDLEVKGIT (157 aa)). Ser-254 bears the Phosphoserine mark. The stretch at 539–582 (KTLTKERKLERKEKMSLKRKAIEEELKAEELDENAEEERIKEDW) forms a coiled coil.

The protein belongs to the DEAD box helicase family. DDX55/SPB4 subfamily. As to quaternary structure, component of pre-60S ribosomal complexes.

The protein localises to the nucleus. The protein resides in the nucleolus. It catalyses the reaction ATP + H2O = ADP + phosphate + H(+). In terms of biological role, ATP-binding RNA helicase involved in the biogenesis of 60S ribosomal subunits. Binds 90S pre-ribosomal particles and dissociates from pre-60S ribosomal particles after processing of 27SB pre-rRNA. Required for the normal formation of 18S rRNA through the processing of pre-rRNAs at sites A0, A1 and A2, and the normal formation of 25S and 5.8S rRNAs through the processing of pre-rRNAs at sites C1 and C2. Also required for recruitment of NOG2 to pre-ribosomes. The polypeptide is ATP-dependent rRNA helicase SPB4 (Saccharomyces cerevisiae (strain ATCC 204508 / S288c) (Baker's yeast)).